The following is a 285-amino-acid chain: uncharacterized protein (285 aa).

The next 7 membrane-spanning stretches (helical) occupy residues 6-26 (YLVV…TPLI), 38-58 (VFAA…YIFP), 84-104 (IFLL…IFLR), 110-130 (GVLA…ELIF), 153-173 (FMMH…DDGF), 176-196 (ISFF…ALMV), and 236-256 (LIFG…TVLV).

The protein resides in the cell membrane. This is an uncharacterized protein from Mycoplasma pneumoniae (strain ATCC 29342 / M129 / Subtype 1) (Mycoplasmoides pneumoniae).